The chain runs to 104 residues: Large ribosomal subunit protein uL23 (104 aa).

This sequence belongs to the universal ribosomal protein uL23 family. As to quaternary structure, part of the 50S ribosomal subunit. Contacts protein L29, and trigger factor when it is bound to the ribosome.

Functionally, one of the early assembly proteins it binds 23S rRNA. One of the proteins that surrounds the polypeptide exit tunnel on the outside of the ribosome. Forms the main docking site for trigger factor binding to the ribosome. In Rhodospirillum rubrum (strain ATCC 11170 / ATH 1.1.1 / DSM 467 / LMG 4362 / NCIMB 8255 / S1), this protein is Large ribosomal subunit protein uL23.